The chain runs to 444 residues: Acyl-CoA 6-desaturase (444 aa).

Over 1–131 (MGKGGNQGEG…DMNLFKTNHV (131 aa)) the chain is Cytoplasmic. In terms of domain architecture, Cytochrome b5 heme-binding spans 18-95 (VPTFSWEEIQ…LKPLLIGELA (78 aa)). A helical transmembrane segment spans residues 132–152 (FFLLLLAHIIALESIAWFTVF). The Lumenal portion of the chain corresponds to 153–157 (YFGNG). Residues 158-178 (WIPTLITAFVLATSQAQAGWL) traverse the membrane as a helical segment. Residues 179-264 (QHDYGHLSVY…KYLPYNHQHE (86 aa)) are Cytoplasmic-facing. A Histidine box-1 motif is present at residues 180–184 (HDYGH). The Histidine box-2 motif lies at 217–221 (HFQHH). The chain crosses the membrane as a helical span at residues 265-285 (YFFLIGPPLLIPMYFQYQIIM). The Lumenal portion of the chain corresponds to 286-305 (TMIVHKNWVDLAWAVSYYIR). The helical transmembrane segment at 306-326 (FFITYIPFYGILGALLFLNFI) threads the bilayer. Topologically, residues 327–444 (RFLESHWFVW…KLWLDAYLHK (118 aa)) are cytoplasmic. A Histidine box-3 motif is present at residues 382-386 (QIEHH).

It belongs to the fatty acid desaturase type 1 family. Expressed in a wide array of tissues, highest expression is found in liver followed by brain, lung, heart, and retina. A lower level is found in breast tumor when compared with normal tissues; lowest levels were found in patients with poor prognostic index.

It localises to the endoplasmic reticulum membrane. The catalysed reaction is (9Z,12Z)-octadecadienoyl-CoA + 2 Fe(II)-[cytochrome b5] + O2 + 2 H(+) = (6Z,9Z,12Z)-octadecatrienoyl-CoA + 2 Fe(III)-[cytochrome b5] + 2 H2O. It carries out the reaction (9Z,12Z,15Z)-octadecatrienoyl-CoA + 2 Fe(II)-[cytochrome b5] + O2 + 2 H(+) = (6Z,9Z,12Z,15Z)-octadecatetraenoyl-CoA + 2 Fe(III)-[cytochrome b5] + 2 H2O. It catalyses the reaction hexadecanoyl-CoA + 2 Fe(II)-[cytochrome b5] + O2 + 2 H(+) = (6Z)-hexadecenoyl-CoA + 2 Fe(III)-[cytochrome b5] + 2 H2O. The enzyme catalyses (9Z,12Z,15Z,18Z,21Z)-tetracosapentaenoyl-CoA + 2 Fe(II)-[cytochrome b5] + O2 + 2 H(+) = (6Z,9Z,12Z,15Z,18Z,21Z)-tetracosahexaenoyl-CoA + 2 Fe(III)-[cytochrome b5] + 2 H2O. The catalysed reaction is (11E)-octadecenoyl-CoA + 2 Fe(II)-[cytochrome b5] + O2 + 2 H(+) = (6Z,11E)-octadecadienoyl-CoA + 2 Fe(III)-[cytochrome b5] + 2 H2O. It carries out the reaction (11Z,14Z)-eicosadienoyl-CoA + 2 Fe(II)-[cytochrome b5] + O2 + 2 H(+) = (8Z,11Z,14Z)-eicosatrienoyl-CoA + 2 Fe(III)-[cytochrome b5] + 2 H2O. It catalyses the reaction (11Z,14Z,17Z)-eicosatrienoyl-CoA + 2 Fe(II)-[cytochrome b5] + O2 + 2 H(+) = (8Z,11Z,14Z,17Z)-eicosatetraenoyl-CoA + 2 Fe(III)-[cytochrome b5] + 2 H2O. It functions in the pathway lipid metabolism; polyunsaturated fatty acid biosynthesis. Functionally, involved in the biosynthesis of highly unsaturated fatty acids (HUFA) from the essential polyunsaturated fatty acids (PUFA) linoleic acid (LA) (18:2n-6) and alpha-linolenic acid (ALA) (18:3n-3) precursors, acting as a fatty acyl-coenzyme A (CoA) desaturase that introduces a cis double bond at carbon 6 of the fatty acyl chain. Catalyzes the first and rate limiting step in this pathway which is the desaturation of LA (18:2n-6) and ALA (18:3n-3) into gamma-linoleate (GLA) (18:3n-6) and stearidonate (18:4n-3), respectively. Subsequently, in the biosynthetic pathway of HUFA n-3 series, it desaturates tetracosapentaenoate (24:5n-3) to tetracosahexaenoate (24:6n-3), which is then converted to docosahexaenoate (DHA)(22:6n-3), an important lipid for nervous system function. Desaturates hexadecanate (palmitate) to produce 6Z-hexadecenoate (sapienate), a fatty acid unique to humans and major component of human sebum, that has been implicated in the development of acne and may have potent antibacterial activity. It can also desaturate (11E)-octadecenoate (trans-vaccenoate, the predominant trans fatty acid in human milk) at carbon 6 generating (6Z,11E)-octadecadienoate. In addition to Delta-6 activity, this enzyme exhibits Delta-8 activity with slight biases toward n-3 fatty acyl-CoA substrates. The polypeptide is Acyl-CoA 6-desaturase (Homo sapiens (Human)).